Reading from the N-terminus, the 285-residue chain is Protease HtpX homolog (285 aa).

Helical transmembrane passes span 7-27 (TAMLMAAITALFIVIGGMIGG) and 30-50 (GMTIALLFALGMNFFSYWFSD). Residue H131 participates in Zn(2+) binding. Residue E132 is part of the active site. H135 provides a ligand contact to Zn(2+). The next 2 helical transmembrane spans lie at 146–166 (ITATMAGAISALANFAMFFGG) and 177–197 (IAGIAVALLAPIAGALIQMAI). E202 serves as a coordination point for Zn(2+).

This sequence belongs to the peptidase M48B family. Requires Zn(2+) as cofactor.

The protein resides in the cell inner membrane. This is Protease HtpX homolog from Burkholderia cenocepacia (strain ATCC BAA-245 / DSM 16553 / LMG 16656 / NCTC 13227 / J2315 / CF5610) (Burkholderia cepacia (strain J2315)).